A 414-amino-acid chain; its full sequence is Esterase FrsA (414 aa).

The protein belongs to the FrsA family.

The catalysed reaction is a carboxylic ester + H2O = an alcohol + a carboxylate + H(+). Catalyzes the hydrolysis of esters. This is Esterase FrsA from Shigella boydii serotype 18 (strain CDC 3083-94 / BS512).